The following is a 190-amino-acid chain: Peptidyl-tRNA hydrolase (190 aa).

Residue Phe14 participates in tRNA binding. The active-site Proton acceptor is the His19. TRNA is bound by residues Met64, Asn66, and Asn112.

It belongs to the PTH family. As to quaternary structure, monomer.

The protein localises to the cytoplasm. The catalysed reaction is an N-acyl-L-alpha-aminoacyl-tRNA + H2O = an N-acyl-L-amino acid + a tRNA + H(+). Functionally, hydrolyzes ribosome-free peptidyl-tRNAs (with 1 or more amino acids incorporated), which drop off the ribosome during protein synthesis, or as a result of ribosome stalling. In terms of biological role, catalyzes the release of premature peptidyl moieties from peptidyl-tRNA molecules trapped in stalled 50S ribosomal subunits, and thus maintains levels of free tRNAs and 50S ribosomes. In Staphylococcus epidermidis (strain ATCC 35984 / DSM 28319 / BCRC 17069 / CCUG 31568 / BM 3577 / RP62A), this protein is Peptidyl-tRNA hydrolase.